The primary structure comprises 360 residues: Mannose-1-phosphate guanylyltransferase catalytic subunit beta (360 aa).

The segment at 2 to 222 (KALILVGGYG…QGFWMDIGQP (221 aa)) is substrate-binding domain. Aspartate 110 contacts GDP-alpha-D-mannose. Aspartate 110 is a Mg(2+) binding site. Lysine 162 is a catalytic residue. Residue aspartate 218 coordinates GDP-alpha-D-mannose. Position 218 (aspartate 218) interacts with Mg(2+). The hexapeptide repeat domain stretch occupies residues 245–360 (CSGPGIVGNV…ESVPEPGIIM (116 aa)).

This sequence belongs to the transferase hexapeptide repeat family. In terms of assembly, component of the GMPPA-GMPPB mannose-1-phosphate guanylyltransferase complex composed of 4 GMPPA subunits and 8 GMPPB subunits; the complex is organized into three layers, a central layer made up of 2 GMPPA dimers sandwiched between two layers each made up of 2 GMPPB dimers. GMPPB catalytic activity is reduced when part of the complex and binding of GDP-alpha-D-Mannose by GMPPA induces allosteric feedback inhibition of GMPPB. Mg(2+) serves as cofactor. Expressed in the liver (at protein level).

It is found in the cytoplasm. The catalysed reaction is alpha-D-mannose 1-phosphate + GTP + H(+) = GDP-alpha-D-mannose + diphosphate. It participates in nucleotide-sugar biosynthesis; GDP-alpha-D-mannose biosynthesis; GDP-alpha-D-mannose from alpha-D-mannose 1-phosphate (GTP route): step 1/1. With respect to regulation, enzyme activity is reduced by incorporation into the GMPPA-GMPPB mannose-1-phosphate guanylyltransferase complex. Allosterically inhibited, when part of the GMPPA-GMPPB complex, by GDP-alpha-D-mannose binding to GMPPA. Its function is as follows. Catalytic subunit of the GMPPA-GMPPB mannose-1-phosphate guanylyltransferase complex. Catalyzes the formation of GDP-mannose, an essential precursor of glycan moieties of glycoproteins and glycolipids. Can catalyze the reverse reaction in vitro. Together with GMPPA regulates GDP-alpha-D-mannose levels. The polypeptide is Mannose-1-phosphate guanylyltransferase catalytic subunit beta (Sus scrofa (Pig)).